The following is a 335-amino-acid chain: Deoxyhypusine hydroxylase (335 aa).

HEAT-like PBS-type repeat units follow at residues 71–97, 104–130, 200–233, 238–264, and 271–298; these read LKHE…VAKD, CRHE…LRDN, LRYR…GLKD, FRHE…ALSN, and VRHE…FLND. Fe cation is bound by residues His-73, Glu-74, His-106, and Glu-107. Residues His-240, Glu-241, His-273, and Glu-274 each contribute to the Fe cation site.

This sequence belongs to the deoxyhypusine hydroxylase family. It depends on Fe(2+) as a cofactor.

The protein localises to the cytoplasm. It localises to the nucleus. It carries out the reaction [eIF5A protein]-deoxyhypusine + AH2 + O2 = [eIF5A protein]-hypusine + A + H2O. The protein operates within protein modification; eIF5A hypusination. Catalyzes the hydroxylation of the N(6)-(4-aminobutyl)-L-lysine intermediate to form hypusine, an essential post-translational modification only found in mature eIF-5A factor. The chain is Deoxyhypusine hydroxylase (lia1) from Neosartorya fischeri (strain ATCC 1020 / DSM 3700 / CBS 544.65 / FGSC A1164 / JCM 1740 / NRRL 181 / WB 181) (Aspergillus fischerianus).